Reading from the N-terminus, the 373-residue chain is Dual-specificity RNA methyltransferase RlmN (373 aa).

Glutamate 94 functions as the Proton acceptor in the catalytic mechanism. Residues 100–339 (EADRATLCVS…VIVRKTRGDD (240 aa)) form the Radical SAM core domain. A disulfide bridge connects residues cysteine 107 and cysteine 344. [4Fe-4S] cluster is bound by residues cysteine 114, cysteine 118, and cysteine 121. S-adenosyl-L-methionine is bound by residues 168–169 (GE), serine 200, 222–224 (SLH), and asparagine 301. The S-methylcysteine intermediate role is filled by cysteine 344.

It belongs to the radical SAM superfamily. RlmN family. [4Fe-4S] cluster is required as a cofactor.

The protein localises to the cytoplasm. It carries out the reaction adenosine(2503) in 23S rRNA + 2 reduced [2Fe-2S]-[ferredoxin] + 2 S-adenosyl-L-methionine = 2-methyladenosine(2503) in 23S rRNA + 5'-deoxyadenosine + L-methionine + 2 oxidized [2Fe-2S]-[ferredoxin] + S-adenosyl-L-homocysteine. The catalysed reaction is adenosine(37) in tRNA + 2 reduced [2Fe-2S]-[ferredoxin] + 2 S-adenosyl-L-methionine = 2-methyladenosine(37) in tRNA + 5'-deoxyadenosine + L-methionine + 2 oxidized [2Fe-2S]-[ferredoxin] + S-adenosyl-L-homocysteine. In terms of biological role, specifically methylates position 2 of adenine 2503 in 23S rRNA and position 2 of adenine 37 in tRNAs. m2A2503 modification seems to play a crucial role in the proofreading step occurring at the peptidyl transferase center and thus would serve to optimize ribosomal fidelity. The polypeptide is Dual-specificity RNA methyltransferase RlmN (Tolumonas auensis (strain DSM 9187 / NBRC 110442 / TA 4)).